The primary structure comprises 102 residues: Iron-sulfur cluster assembly protein CyaY (102 aa).

It belongs to the frataxin family.

Functionally, involved in iron-sulfur (Fe-S) cluster assembly. May act as a regulator of Fe-S biogenesis. This is Iron-sulfur cluster assembly protein CyaY from Mannheimia succiniciproducens (strain KCTC 0769BP / MBEL55E).